We begin with the raw amino-acid sequence, 140 residues long: Small ribosomal subunit protein uS12 (140 aa).

Residue Asp-102 is modified to 3-methylthioaspartic acid.

Belongs to the universal ribosomal protein uS12 family. In terms of assembly, part of the 30S ribosomal subunit. Contacts proteins S8 and S17. May interact with IF1 in the 30S initiation complex.

Functionally, with S4 and S5 plays an important role in translational accuracy. Its function is as follows. Interacts with and stabilizes bases of the 16S rRNA that are involved in tRNA selection in the A site and with the mRNA backbone. Located at the interface of the 30S and 50S subunits, it traverses the body of the 30S subunit contacting proteins on the other side and probably holding the rRNA structure together. The combined cluster of proteins S8, S12 and S17 appears to hold together the shoulder and platform of the 30S subunit. The protein is Small ribosomal subunit protein uS12 of Bacillus cytotoxicus (strain DSM 22905 / CIP 110041 / 391-98 / NVH 391-98).